The following is a 114-amino-acid chain: Superoxide dismutase [Cu-Zn] (114 aa).

H37, H39, and H54 together coordinate Cu cation. Residues 49–73 are disordered; that stretch reads MSSGPHYNPRNKEHGAPTDENRHLG. Zn(2+)-binding residues include H54, H62, H71, and D74. Over residues 58 to 73 the composition is skewed to basic and acidic residues; it reads RNKEHGAPTDENRHLG. Cu cation is bound at residue H111.

The protein belongs to the Cu-Zn superoxide dismutase family. In terms of assembly, homodimer. Cu cation serves as cofactor. Zn(2+) is required as a cofactor.

The protein resides in the cytoplasm. It catalyses the reaction 2 superoxide + 2 H(+) = H2O2 + O2. Functionally, destroys radicals which are normally produced within the cells and which are toxic to biological systems. This chain is Superoxide dismutase [Cu-Zn], found in Drosophila madeirensis (Fruit fly).